The primary structure comprises 65 residues: Large ribosomal subunit protein bL35 (65 aa).

It belongs to the bacterial ribosomal protein bL35 family.

In Buchnera aphidicola subsp. Cinara cedri (strain Cc), this protein is Large ribosomal subunit protein bL35.